We begin with the raw amino-acid sequence, 326 residues long: Vitamin B12 import system permease protein BtuC (326 aa).

9 consecutive transmembrane segments (helical) span residues 17-39, 59-81, 88-107, 111-133, 146-168, 188-205, 242-264, 274-296, and 303-322; these read LSLS…QWIA, RTLA…QALF, PGLL…AVLL, QLPG…LILL, LLAG…YFST, WQQS…IWIC, MVGV…PHIL, VLLP…VARL, and LPIG…WLLL.

It belongs to the binding-protein-dependent transport system permease family. FecCD subfamily. In terms of assembly, the complex is composed of two ATP-binding proteins (BtuD), two transmembrane proteins (BtuC) and a solute-binding protein (BtuF).

Its subcellular location is the cell inner membrane. Functionally, part of the ABC transporter complex BtuCDF involved in vitamin B12 import. Involved in the translocation of the substrate across the membrane. In Salmonella typhi, this protein is Vitamin B12 import system permease protein BtuC.